The following is a 396-amino-acid chain: Elongation factor Tu (396 aa).

Positions 10–206 (KPHVNVGTIG…ALDASIPEPK (197 aa)) constitute a tr-type G domain. The segment at 19–26 (GHVDHGKT) is G1. Position 19–26 (19–26 (GHVDHGKT)) interacts with GTP. Threonine 26 provides a ligand contact to Mg(2+). Residues 60-64 (GITIS) are G2. Residues 81–84 (DCPG) form a G3 region. GTP is bound by residues 81-85 (DCPGH) and 136-139 (NKAD). The G4 stretch occupies residues 136–139 (NKAD). The segment at 174–176 (SAL) is G5.

It belongs to the TRAFAC class translation factor GTPase superfamily. Classic translation factor GTPase family. EF-Tu/EF-1A subfamily. In terms of assembly, monomer.

It is found in the cytoplasm. The enzyme catalyses GTP + H2O = GDP + phosphate + H(+). Its function is as follows. GTP hydrolase that promotes the GTP-dependent binding of aminoacyl-tRNA to the A-site of ribosomes during protein biosynthesis. This chain is Elongation factor Tu, found in Dichelobacter nodosus (strain VCS1703A).